Reading from the N-terminus, the 123-residue chain is Fluoride-specific ion channel FluC 2 (123 aa).

4 helical membrane passes run Leu3–Ile23, Ile38–Thr58, Leu62–Tyr82, and Leu94–Gly114. Na(+) contacts are provided by Gly72 and Ser75.

The protein belongs to the fluoride channel Fluc/FEX (TC 1.A.43) family.

The protein localises to the cell inner membrane. It carries out the reaction fluoride(in) = fluoride(out). With respect to regulation, na(+) is not transported, but it plays an essential structural role and its presence is essential for fluoride channel function. Fluoride-specific ion channel. Important for reducing fluoride concentration in the cell, thus reducing its toxicity. In Prochlorococcus marinus subsp. pastoris (strain CCMP1986 / NIES-2087 / MED4), this protein is Fluoride-specific ion channel FluC 2.